The following is a 225-amino-acid chain: MFERGDQGSMHQKRRGPGAHQCYFTKMITMATTFHTVDNIFVCTECKTYHVCDGGEDCYLVNMGEGLVCELTGRCAVNSVSFGNPRPMSPVIYPHHNTPGPNQFLDSVVQCVQRDVAIYLSSSSYEEVKDKVLLCQGELREEVADLIKTTFNHCQNIFQSAQCAYSLICSIYIHVIISVYSSKTVYGNLIFKCTKNKKFDSVAKSIRQAWMSILTTGDTFTTAVM.

Belongs to the herpesviridae UL92 family.

The polypeptide is Gene 31 protein (31) (Connochaetes taurinus (Blue wildebeest)).